We begin with the raw amino-acid sequence, 370 residues long: Seipin (370 aa).

The first 18 residues, 1–18 (MNILLRLIVFALDPLGLG), serve as a signal peptide directing secretion. Over 19-55 (RRFLIRPAVNLGWNVYDRVRSKADEKVGTVRELVLRL) the chain is Cytoplasmic. A helical transmembrane segment spans residues 56-76 (GLIAFAVVLIIWLAVFMYAAF). Topologically, residues 77-251 (YYVYMPAISH…GLRYIMFNWP (175 aa)) are lumenal. The helical transmembrane segment at 252 to 272 (VLSAIVAISTNLFFILVVFLL) threads the bilayer. Residues 273–370 (SWYHWSDAKW…RPTKKTTADH (98 aa)) lie on the Cytoplasmic side of the membrane. Residues 346–370 (KSRSGKRESPDALRKRPTKKTTADH) are disordered. Over residues 350–359 (GKRESPDALR) the composition is skewed to basic and acidic residues.

In terms of tissue distribution, widely expressed, with highest levels detected in fat body, moderate levels detected in salivary gland, midgut and muscle, and weak expression detected in brain.

Its subcellular location is the endoplasmic reticulum membrane. The protein resides in the lipid droplet. In terms of biological role, acts as a tissue-autonomous lipid modulator, preventing ectopic lipid accumulation in salivary gland (a non-adipose tissue) and in promoting lipid storage in fat tissue. Required for the growth and maturation of small nascent lipid droplets (LDs) into larger mature LDs. The sequence is that of Seipin from Drosophila melanogaster (Fruit fly).